The sequence spans 308 residues: Ribonuclease HIII (308 aa).

The RNase H type-2 domain occupies 88 to 304; the sequence is FHCIGSDEAG…RDKAIHLMNQ (217 aa). A divalent metal cation is bound by residues Asp94, Glu95, and Asp199.

This sequence belongs to the RNase HII family. RnhC subfamily. Mn(2+) serves as cofactor. It depends on Mg(2+) as a cofactor.

It localises to the cytoplasm. It carries out the reaction Endonucleolytic cleavage to 5'-phosphomonoester.. In terms of biological role, endonuclease that specifically degrades the RNA of RNA-DNA hybrids. This Staphylococcus epidermidis (strain ATCC 12228 / FDA PCI 1200) protein is Ribonuclease HIII.